Here is a 238-residue protein sequence, read N- to C-terminus: Immunoglobulin superfamily member 6 (238 aa).

The N-terminal stretch at 1 to 27 is a signal peptide; it reads MGPVSTSRRGLRLGISLILLQVGVVGA. The Extracellular segment spans residues 28-153; the sequence is CTVSVLQPGY…RLFSREVHSL (126 aa). The 105-residue stretch at 30 to 134 folds into the Ig-like C2-type domain; that stretch reads VSVLQPGYLE…EPVPTAKQTG (105 aa). Cysteine 51 and cysteine 118 are disulfide-bonded. A helical transmembrane segment spans residues 154-174; it reads LIVLLALLAVYVTGVCVIFIV. Residues 175–238 are Cytoplasmic-facing; that stretch reads LFRSKSNTPR…RKALPSPGRP (64 aa). Residues 215-230 are compositionally biased toward basic and acidic residues; it reads ETSHQPEQDGNYENRK. The segment at 215-238 is disordered; it reads ETSHQPEQDGNYENRKALPSPGRP.

The protein localises to the membrane. In Rattus norvegicus (Rat), this protein is Immunoglobulin superfamily member 6 (Igsf6).